Here is a 220-residue protein sequence, read N- to C-terminus: Putative NAD(P)H nitroreductase SERP2086 (220 aa).

It belongs to the nitroreductase family. It depends on FMN as a cofactor.

This chain is Putative NAD(P)H nitroreductase SERP2086, found in Staphylococcus epidermidis (strain ATCC 35984 / DSM 28319 / BCRC 17069 / CCUG 31568 / BM 3577 / RP62A).